The chain runs to 318 residues: Deoxyribose-phosphate aldolase (318 aa).

Residue D155 is the Proton donor/acceptor of the active site. The active-site Schiff-base intermediate with acetaldehyde is the K218. K254 (proton donor/acceptor) is an active-site residue.

Belongs to the DeoC/FbaB aldolase family. DeoC type 2 subfamily. In terms of assembly, interacts with YBX1. In terms of tissue distribution, mainly expressed in liver, lung and colon.

The protein resides in the cytoplasm. It is found in the cytoplasmic granule. It localises to the nucleus. The enzyme catalyses 2-deoxy-D-ribose 5-phosphate = D-glyceraldehyde 3-phosphate + acetaldehyde. It functions in the pathway carbohydrate degradation; 2-deoxy-D-ribose 1-phosphate degradation; D-glyceraldehyde 3-phosphate and acetaldehyde from 2-deoxy-alpha-D-ribose 1-phosphate: step 2/2. In terms of biological role, catalyzes a reversible aldol reaction between acetaldehyde and D-glyceraldehyde 3-phosphate to generate 2-deoxy-D-ribose 5-phosphate. Participates in stress granule (SG) assembly. May allow ATP production from extracellular deoxyinosine in conditions of energy deprivation. The polypeptide is Deoxyribose-phosphate aldolase (DERA) (Homo sapiens (Human)).